Consider the following 259-residue polypeptide: Phosphatidylserine decarboxylase proenzyme (259 aa).

Residues aspartate 86, histidine 142, and serine 226 each act as charge relay system; for autoendoproteolytic cleavage activity in the active site. Serine 226 (schiff-base intermediate with substrate; via pyruvic acid; for decarboxylase activity) is an active-site residue. Position 226 is a pyruvic acid (Ser); by autocatalysis (serine 226).

Belongs to the phosphatidylserine decarboxylase family. PSD-B subfamily. Prokaryotic type I sub-subfamily. As to quaternary structure, heterodimer of a large membrane-associated beta subunit and a small pyruvoyl-containing alpha subunit. Pyruvate is required as a cofactor. In terms of processing, is synthesized initially as an inactive proenzyme. Formation of the active enzyme involves a self-maturation process in which the active site pyruvoyl group is generated from an internal serine residue via an autocatalytic post-translational modification. Two non-identical subunits are generated from the proenzyme in this reaction, and the pyruvate is formed at the N-terminus of the alpha chain, which is derived from the carboxyl end of the proenzyme. The autoendoproteolytic cleavage occurs by a canonical serine protease mechanism, in which the side chain hydroxyl group of the serine supplies its oxygen atom to form the C-terminus of the beta chain, while the remainder of the serine residue undergoes an oxidative deamination to produce ammonia and the pyruvoyl prosthetic group on the alpha chain. During this reaction, the Ser that is part of the protease active site of the proenzyme becomes the pyruvoyl prosthetic group, which constitutes an essential element of the active site of the mature decarboxylase.

It localises to the cell membrane. It catalyses the reaction a 1,2-diacyl-sn-glycero-3-phospho-L-serine + H(+) = a 1,2-diacyl-sn-glycero-3-phosphoethanolamine + CO2. It participates in phospholipid metabolism; phosphatidylethanolamine biosynthesis; phosphatidylethanolamine from CDP-diacylglycerol: step 2/2. In terms of biological role, catalyzes the formation of phosphatidylethanolamine (PtdEtn) from phosphatidylserine (PtdSer). In Geobacillus sp. (strain WCH70), this protein is Phosphatidylserine decarboxylase proenzyme.